We begin with the raw amino-acid sequence, 157 residues long: MHPVRKQRLMTVLFIVIASSVAVGLMVFALSKNLNLFYPPSQIVSGEAPRGPTIRGGGCVVPGSVERASDSLKVAFSITDGKESVLVRYEGLLPDLFDEGEAAVVTGKVTQEGVFEAVEVLAKHDETYTPPEVENAMKESVDGVEHQKTCEGLDYAS.

At M1–R8 the chain is on the cytoplasmic side. The helical; Signal-anchor for type II membrane protein transmembrane segment at L9 to A29 threads the bilayer. The Periplasmic portion of the chain corresponds to L30 to S157. The heme site is built by H124 and Y128.

It belongs to the CcmE/CycJ family.

The protein resides in the cell inner membrane. Functionally, heme chaperone required for the biogenesis of c-type cytochromes. Transiently binds heme delivered by CcmC and transfers the heme to apo-cytochromes in a process facilitated by CcmF and CcmH. This is Cytochrome c-type biogenesis protein CcmE from Saccharophagus degradans (strain 2-40 / ATCC 43961 / DSM 17024).